We begin with the raw amino-acid sequence, 62 residues long: Large ribosomal subunit protein uL29 (62 aa).

This sequence belongs to the universal ribosomal protein uL29 family.

The polypeptide is Large ribosomal subunit protein uL29 (Geobacter sp. (strain M21)).